The primary structure comprises 418 residues: Tyrosine--tRNA ligase (418 aa).

Tyrosine 34 provides a ligand contact to L-tyrosine. Positions 39 to 48 (PTADSLHLGH) match the 'HIGH' region motif. 2 residues coordinate L-tyrosine: tyrosine 169 and glutamine 173. The 'KMSKS' region motif lies at 229–233 (KFGKS). Lysine 232 contacts ATP. The 67-residue stretch at 352-418 (LNIVDMLVTA…GKKKYAVLTY (67 aa)) folds into the S4 RNA-binding domain.

It belongs to the class-I aminoacyl-tRNA synthetase family. TyrS type 1 subfamily. Homodimer.

Its subcellular location is the cytoplasm. It catalyses the reaction tRNA(Tyr) + L-tyrosine + ATP = L-tyrosyl-tRNA(Tyr) + AMP + diphosphate + H(+). In terms of biological role, catalyzes the attachment of tyrosine to tRNA(Tyr) in a two-step reaction: tyrosine is first activated by ATP to form Tyr-AMP and then transferred to the acceptor end of tRNA(Tyr). The protein is Tyrosine--tRNA ligase of Streptococcus equi subsp. zooepidemicus (strain MGCS10565).